We begin with the raw amino-acid sequence, 98 residues long: NADH-ubiquinone oxidoreductase chain 4L (98 aa).

Transmembrane regions (helical) follow at residues 1–21 (MLSINLNLIVAFLLALMGVLI), 29–49 (TLLCLEGMMLSLFILMTLLIT), and 59–79 (TPLILLVFSACEAAIGLALLV).

This sequence belongs to the complex I subunit 4L family. Core subunit of respiratory chain NADH dehydrogenase (Complex I) which is composed of 45 different subunits.

The protein localises to the mitochondrion inner membrane. The catalysed reaction is a ubiquinone + NADH + 5 H(+)(in) = a ubiquinol + NAD(+) + 4 H(+)(out). Core subunit of the mitochondrial membrane respiratory chain NADH dehydrogenase (Complex I) which catalyzes electron transfer from NADH through the respiratory chain, using ubiquinone as an electron acceptor. Part of the enzyme membrane arm which is embedded in the lipid bilayer and involved in proton translocation. The sequence is that of NADH-ubiquinone oxidoreductase chain 4L (MT-ND4L) from Sminthopsis crassicaudata (Fat-tailed dunnart).